The following is a 283-amino-acid chain: Bifunctional protein FolD (283 aa).

NADP(+) is bound by residues Gly166–Ser168, Ser191, and Ile232.

The protein belongs to the tetrahydrofolate dehydrogenase/cyclohydrolase family. In terms of assembly, homodimer.

It carries out the reaction (6R)-5,10-methylene-5,6,7,8-tetrahydrofolate + NADP(+) = (6R)-5,10-methenyltetrahydrofolate + NADPH. The enzyme catalyses (6R)-5,10-methenyltetrahydrofolate + H2O = (6R)-10-formyltetrahydrofolate + H(+). Its pathway is one-carbon metabolism; tetrahydrofolate interconversion. In terms of biological role, catalyzes the oxidation of 5,10-methylenetetrahydrofolate to 5,10-methenyltetrahydrofolate and then the hydrolysis of 5,10-methenyltetrahydrofolate to 10-formyltetrahydrofolate. The sequence is that of Bifunctional protein FolD from Laribacter hongkongensis (strain HLHK9).